Here is a 294-residue protein sequence, read N- to C-terminus: Probable endonuclease 4 (294 aa).

9 residues coordinate Zn(2+): histidine 71, histidine 111, glutamate 148, aspartate 182, histidine 185, histidine 217, aspartate 230, histidine 232, and glutamate 262.

Belongs to the AP endonuclease 2 family. Zn(2+) serves as cofactor.

The enzyme catalyses Endonucleolytic cleavage to 5'-phosphooligonucleotide end-products.. Its function is as follows. Endonuclease IV plays a role in DNA repair. It cleaves phosphodiester bonds at apurinic or apyrimidinic (AP) sites, generating a 3'-hydroxyl group and a 5'-terminal sugar phosphate. The sequence is that of Probable endonuclease 4 from Acholeplasma laidlawii (strain PG-8A).